Here is a 53-residue protein sequence, read N- to C-terminus: UPF0391 membrane protein TM1040_2720 (53 aa).

The next 2 membrane-spanning stretches (helical) occupy residues 4–24 and 29–48; these read WALA…GGIA and GIAQ…ALIL.

This sequence belongs to the UPF0391 family.

Its subcellular location is the cell membrane. This chain is UPF0391 membrane protein TM1040_2720, found in Ruegeria sp. (strain TM1040) (Silicibacter sp.).